The following is a 308-amino-acid chain: Baculoviral IAP repeat-containing protein bir-2 (308 aa).

2 BIR repeats span residues 27–98 (RFAS…EFVM) and 170–241 (RLAT…DFIK). Zn(2+)-binding residues include cysteine 68, cysteine 71, histidine 87, cysteine 94, cysteine 211, cysteine 214, histidine 230, and cysteine 237.

It belongs to the IAP family.

The chain is Baculoviral IAP repeat-containing protein bir-2 from Caenorhabditis elegans.